A 223-amino-acid polypeptide reads, in one-letter code: Small ribosomal subunit protein uS3 (223 aa).

A KH type-2 domain is found at 39–107 (VREFLHKKLA…PVQINIEEVR (69 aa)).

This sequence belongs to the universal ribosomal protein uS3 family. In terms of assembly, part of the 30S ribosomal subunit. Forms a tight complex with proteins S10 and S14.

Functionally, binds the lower part of the 30S subunit head. Binds mRNA in the 70S ribosome, positioning it for translation. The polypeptide is Small ribosomal subunit protein uS3 (Francisella tularensis subsp. holarctica (strain FTNF002-00 / FTA)).